We begin with the raw amino-acid sequence, 531 residues long: Transcription termination/antitermination protein NusA (531 aa).

One can recognise an S1 motif domain in the interval 165–235; the sequence is GEVIEAKVED…SLWPITLSRS (71 aa). In terms of domain architecture, KH spans 340 to 410; that stretch reads DTSIEVVVPA…FGIKKRREKI (71 aa). A compositionally biased stretch (basic and acidic residues) spans 463 to 475; sequence EKQVTPKEKEKVQ. The segment at 463–531 is disordered; the sequence is EKQVTPKEKE…KQTFDSFDDL (69 aa). The segment covering 476–490 has biased composition (basic residues); sequence PKAKVHSNSHSKKPA. Basic and acidic residues predominate over residues 502–512; that stretch reads ASDKNLKKDQV. A compositionally biased stretch (polar residues) spans 513–531; it reads DNNQTNPQTKQTFDSFDDL.

It belongs to the NusA family. Monomer. Binds directly to the core enzyme of the DNA-dependent RNA polymerase and to nascent RNA.

The protein resides in the cytoplasm. Participates in both transcription termination and antitermination. This Mycoplasma genitalium (strain ATCC 33530 / DSM 19775 / NCTC 10195 / G37) (Mycoplasmoides genitalium) protein is Transcription termination/antitermination protein NusA.